A 143-amino-acid chain; its full sequence is Endoribonuclease YbeY (143 aa).

Zn(2+) is bound by residues His113, His117, and Asp123.

It belongs to the endoribonuclease YbeY family. Zn(2+) serves as cofactor.

The protein localises to the cytoplasm. Functionally, single strand-specific metallo-endoribonuclease involved in late-stage 70S ribosome quality control and in maturation of the 3' terminus of the 16S rRNA. The polypeptide is Endoribonuclease YbeY (Elusimicrobium minutum (strain Pei191)).